The following is a 501-amino-acid chain: Glucose-6-phosphate isomerase (501 aa).

The disordered stretch occupies residues G78–S101. The span at R86–G97 shows a compositional bias: basic and acidic residues. Residue E333 is the Proton donor of the active site. Active-site residues include H364 and K474.

This sequence belongs to the GPI family.

The protein localises to the cytoplasm. It carries out the reaction alpha-D-glucose 6-phosphate = beta-D-fructose 6-phosphate. The protein operates within carbohydrate biosynthesis; gluconeogenesis. It functions in the pathway carbohydrate degradation; glycolysis; D-glyceraldehyde 3-phosphate and glycerone phosphate from D-glucose: step 2/4. Catalyzes the reversible isomerization of glucose-6-phosphate to fructose-6-phosphate. The protein is Glucose-6-phosphate isomerase of Sphingopyxis alaskensis (strain DSM 13593 / LMG 18877 / RB2256) (Sphingomonas alaskensis).